Consider the following 487-residue polypeptide: MFRQLKKNLVATLIAAMTIGQVAPAFADSADTLPDMGTSAGSTLSIGQEMQMGDYYVRQLRGSAPLINDPLLTQYINSLGMRLVSHANSVKTPFHFFLINNDEINAFAFFGGNVVLHSALFRYSDNESQLASVMAHEISHVTQRHLARAMEDQQRNAPLTWVGALGSILLAMASPQAGMAALTGTLAGTRQGMISFTQQNEQEADRIGIQVLQRSGFDPQAMPTFLEKLLDQARYSSRPPEILLTHPLPESRLADARNRANQMRPMVVQSSEDFYLAKARTLGMYNSGRNQLTSDLLDEWAKGNVRQQRAAQYGRALQAMEANKYDEARKTLQPLLAAEPGNAWYLDLATDIDLGQNKANEAINRLKNARDLRTNPVLQLNLANAYLQGGQPQEAANILNRYTFNNKDDSNGWDLLAQAEAALNNRDQELAARAEGYALAGRLDQAISLLSSASSQVKLGSLQQARYDARIDQLRQLQERFKPYTKM.

Positions 1–27 are cleaved as a signal peptide; that stretch reads MFRQLKKNLVATLIAAMTIGQVAPAFA. Residue histidine 136 coordinates Zn(2+). Glutamate 137 is a catalytic residue. The Zn(2+) site is built by histidine 140 and glutamate 201. Aspartate 205 acts as the Proton donor in catalysis. TPR repeat units lie at residues 309-342, 344-376, 377-409, and 427-460; these read RAAQYGRALQAMEANKYDEARKTLQPLLAAEPGN, WYLDLATDIDLGQNKANEAINRLKNARDLRTNP, VLQLNLANAYLQGGQPQEAANILNRYTFNNKDD, and DQELAARAEGYALAGRLDQAISLLSSASSQVKLG.

Belongs to the peptidase M48 family. BepA subfamily. It depends on Zn(2+) as a cofactor.

It is found in the periplasm. Functions both as a chaperone and a metalloprotease. Maintains the integrity of the outer membrane by promoting either the assembly or the elimination of outer membrane proteins, depending on their folding state. This is Beta-barrel assembly-enhancing protease from Escherichia coli O157:H7.